Consider the following 130-residue polypeptide: Small ribosomal subunit protein uS8 (130 aa).

Belongs to the universal ribosomal protein uS8 family. Part of the 30S ribosomal subunit. Contacts proteins S5 and S12.

In terms of biological role, one of the primary rRNA binding proteins, it binds directly to 16S rRNA central domain where it helps coordinate assembly of the platform of the 30S subunit. This Vibrio vulnificus (strain CMCP6) protein is Small ribosomal subunit protein uS8.